A 564-amino-acid chain; its full sequence is MAQVQRMSRLMVKTLRDDPADAETLNHKLLVRADYVRRTAAGIWSWLPLGKKVLENVARVVREEMDAMGGQEVLLPALLPKEPYEATGRWEEYGPELFRLKDRKGAEYLLGPTHEEIFTQLVKDQCSSYKDLPVILYQIQAKYRDEARPRAGILRGREFLMKDSYSFDTADEGLAQSYALHREAYIKIFNRLGLDHRIVSAVSGAMGGSASEEFLAPAPAGEDTFVDCPACDYAANTEAVTFVAPAVESVEHPAVEELDTPDTPTIESLAEYLGVPASATLKNLLVKADGEIVAVGVPGDREVDLGKLGEHLAPAVVELVTAEDFEGRDDLVRGYVGPQGLEKVRYIADPRVAPGTAWITGANKINTHAKNVVAGRDFEVDDYLDVVVVEEGDPCPSCGTGLRLDRAIEIGHIFQLGRKYADAFQLDVLGKEGKPVRVTMGSYGIGVSRAVAALAEQTADEQGLCWPKEIAPADVHVVAAGKALQTELALDVAEKLGAAGVRVLVDDRAGVSPGVKFTDAELIGVPQILVAGRRSAEGVLELKDRKTGEREELTVEEAIARLSA.

The protein belongs to the class-II aminoacyl-tRNA synthetase family. ProS type 1 subfamily. As to quaternary structure, homodimer.

It localises to the cytoplasm. It catalyses the reaction tRNA(Pro) + L-proline + ATP = L-prolyl-tRNA(Pro) + AMP + diphosphate. In terms of biological role, catalyzes the attachment of proline to tRNA(Pro) in a two-step reaction: proline is first activated by ATP to form Pro-AMP and then transferred to the acceptor end of tRNA(Pro). As ProRS can inadvertently accommodate and process non-cognate amino acids such as alanine and cysteine, to avoid such errors it has two additional distinct editing activities against alanine. One activity is designated as 'pretransfer' editing and involves the tRNA(Pro)-independent hydrolysis of activated Ala-AMP. The other activity is designated 'posttransfer' editing and involves deacylation of mischarged Ala-tRNA(Pro). The misacylated Cys-tRNA(Pro) is not edited by ProRS. The chain is Proline--tRNA ligase 1 from Streptomyces avermitilis (strain ATCC 31267 / DSM 46492 / JCM 5070 / NBRC 14893 / NCIMB 12804 / NRRL 8165 / MA-4680).